Here is a 55-residue protein sequence, read N- to C-terminus: Spermatid nuclear transition protein 1 (55 aa).

Residues 1-42 (MSTSRKLKTHGMRRGKNRAPHKGVKRGGSKRKYRKSVLKSRK) show a composition bias toward basic residues. The disordered stretch occupies residues 1-55 (MSTSRKLKTHGMRRGKNRAPHKGVKRGGSKRKYRKSVLKSRKRGDDASRNYRSHL). A phosphoserine mark is found at Ser-36 and Ser-40.

The protein belongs to the nuclear transition protein 1 family. As to expression, testis-specific.

It localises to the nucleus. Its subcellular location is the chromosome. Plays a key role in the replacement of histones to protamine in the elongating spermatids of mammals. In condensing spermatids, loaded onto the nucleosomes, where it promotes the recruitment and processing of protamines, which are responsible for histone eviction. The histone H2AB1-H2BC1/TH2B dimer is required for loading of TNP1 onto chromatin. The chain is Spermatid nuclear transition protein 1 from Mus musculus (Mouse).